Reading from the N-terminus, the 134-residue chain is Syncollin (134 aa).

The N-terminal stretch at 1–21 is a signal peptide; that stretch reads MSPLRPLLLALALASVPCAQG.

Monomer and homooligomer; most probably hexameric. Interacts with GP2. Post-translationally, contains intrachain disulfide bonds.

It is found in the zymogen granule membrane. The protein localises to the zymogen granule lumen. Functions in exocytosis in pancreatic acinar cells regulating the fusion of zymogen granules with each other. May have a pore-forming activity on membranes and regulate exocytosis in other exocrine tissues. In Homo sapiens (Human), this protein is Syncollin (SYCN).